Consider the following 1697-residue polypeptide: Histone acetyltransferase HAC1 (1697 aa).

The segment covering 1–16 (MNVQAHMSGQVSNQGT) has biased composition (polar residues). 6 disordered regions span residues 1–45 (MNVQ…LGPS), 202–221 (SNFG…QRNT), 385–439 (SFQA…QQQR), 555–574 (HWQS…SNER), 583–631 (RMSG…GNRD), and 843–901 (IGIA…GKPE). Composition is skewed to low complexity over residues 17–28 (MSQQNGNSQMQN) and 202–217 (SNFG…SMSS). The segment covering 385–398 (SFQAVSRTSSSLSH) has biased composition (polar residues). The span at 399–439 (QQQQFQQQPNRFQQQPNQFHQQQQQFLHQQQLKQQSQQQQR) shows a compositional bias: low complexity. 2 stretches are compositionally biased toward polar residues: residues 556–571 (WQSQ…NSMS) and 584–628 (MSGT…NGNG). Residues 629 to 709 (NRDPRFKNQQ…EPNCPVCIPV (81 aa)) form a TAZ-type 1 zinc finger. A compositionally biased stretch (basic and acidic residues) spans 873–901 (TKVEKEPESLKKENLAESTEHTSKSGKPE). The PHD-type zinc-finger motif lies at 989–1066 (HYFCIPCYNE…EYTCPYCFIA (78 aa)). The 437-residue stretch at 1081–1517 (VLGAKDLPRT…VLYHLHNPTA (437 aa)) folds into the CBP/p300-type HAT domain. Residues 1204–1206 (LDS), 1223–1224 (RT), and tryptophan 1279 each bind acetyl-CoA. ZZ-type zinc fingers lie at residues 1399-1462 (HLQP…IMDI) and 1519-1572 (AFVT…SLAD). The Zn(2+) site is built by cysteine 1404, cysteine 1407, cysteine 1419, cysteine 1422, cysteine 1428, cysteine 1431, histidine 1444, histidine 1452, cysteine 1524, cysteine 1527, cysteine 1539, cysteine 1542, cysteine 1548, cysteine 1551, histidine 1560, and histidine 1562. The TAZ-type 2 zinc-finger motif lies at 1579–1662 (EARQLRVLQL…ECHVPRCRDL (84 aa)).

Rosette leaves, stems and flowers.

The protein localises to the nucleus. It catalyses the reaction L-lysyl-[protein] + acetyl-CoA = N(6)-acetyl-L-lysyl-[protein] + CoA + H(+). In terms of biological role, acetyltransferase enzyme. Acetylates histones, giving a specific tag for transcriptional activation. This chain is Histone acetyltransferase HAC1 (HAC1), found in Arabidopsis thaliana (Mouse-ear cress).